Reading from the N-terminus, the 298-residue chain is GTP-binding protein REM 1 (298 aa).

The interval 1-73 (MTLNTEQEAK…DDWSSESSDS (73 aa)) is disordered. Over residues 35–55 (TVPSTQSQHPRLGQSASLNPP) the composition is skewed to polar residues. Serine 51 carries the post-translational modification Phosphoserine. Residues 63–73 (PDDWSSESSDS) show a composition bias toward low complexity. Residues 87–94 (GDPGVGKT) and 195–198 (NKAD) contribute to the GTP site. The segment at 268 to 287 (ARRFLARLTARSARRRALKA) is calmodulin-binding.

It belongs to the small GTPase superfamily. RGK family. As to quaternary structure, in vitro, interacts with calmodulin in a calcium-dependent manner. In terms of tissue distribution, most highly expressed in the endothelial lining of the blood vessels in uterus and heart. Lower levels found in spleen, lymph node, kidney and testis. Also found in cells with secretory function such as the islets of Langerhans, lobule/duct epithelium in the breast, bile duct epithelium in the liver, surface epithelium in the endometrial glands of the uterus, colon mucosa and acinar cells in the pancreas and the prostate.

Functionally, promotes endothelial cell sprouting and actin cytoskeletal reorganization. May be involved in angiogenesis. May function in Ca(2+) signaling. This chain is GTP-binding protein REM 1 (REM1), found in Homo sapiens (Human).